Consider the following 187-residue polypeptide: Large ribosomal subunit protein uL5 (187 aa).

The protein belongs to the universal ribosomal protein uL5 family. As to quaternary structure, part of the 50S ribosomal subunit; part of the 5S rRNA/L5/L18/L25 subcomplex. Contacts the 5S rRNA and the P site tRNA. Forms a bridge to the 30S subunit in the 70S ribosome.

Its function is as follows. This is one of the proteins that bind and probably mediate the attachment of the 5S RNA into the large ribosomal subunit, where it forms part of the central protuberance. In the 70S ribosome it contacts protein S13 of the 30S subunit (bridge B1b), connecting the 2 subunits; this bridge is implicated in subunit movement. Contacts the P site tRNA; the 5S rRNA and some of its associated proteins might help stabilize positioning of ribosome-bound tRNAs. In Mycobacterium leprae (strain Br4923), this protein is Large ribosomal subunit protein uL5.